Consider the following 320-residue polypeptide: 3-hydroxybenzoate 6-hydroxylase 2 (320 aa).

Residues 1–25 (MRSTNTRSARSRPTKRSVNASATPT) are disordered. Residues 16–25 (RSVNASATPT) are compositionally biased toward polar residues.

It belongs to the 3-hydroxybenzoate 6-hydroxylase family. The cofactor is FAD.

The catalysed reaction is 3-hydroxybenzoate + NADH + O2 + H(+) = 2,5-dihydroxybenzoate + NAD(+) + H2O. Catalyzes the conversion of 3-hydroxybenzoate to gentisate. This is 3-hydroxybenzoate 6-hydroxylase 2 (hbzD) from Aquipseudomonas alcaligenes (Pseudomonas alcaligenes).